Reading from the N-terminus, the 193-residue chain is Acyl carrier protein phosphodiesterase (193 aa).

This sequence belongs to the AcpH family.

It carries out the reaction holo-[ACP] + H2O = apo-[ACP] + (R)-4'-phosphopantetheine + H(+). Its function is as follows. Converts holo-ACP to apo-ACP by hydrolytic cleavage of the phosphopantetheine prosthetic group from ACP. In Escherichia coli O6:H1 (strain CFT073 / ATCC 700928 / UPEC), this protein is Acyl carrier protein phosphodiesterase.